The chain runs to 448 residues: Ribosomal protein uS12 methylthiotransferase RimO (448 aa).

The 113-residue stretch at 7–119 (QSLHLISLGC…IDSMIAQRRS (113 aa)) folds into the MTTase N-terminal domain. The [4Fe-4S] cluster site is built by cysteine 16, cysteine 50, cysteine 82, cysteine 151, cysteine 155, and cysteine 158. One can recognise a Radical SAM core domain in the interval 137–366 (IGSSFHAYIK…NKIIQSQYKA (230 aa)).

Belongs to the methylthiotransferase family. RimO subfamily. Requires [4Fe-4S] cluster as cofactor.

The protein localises to the cytoplasm. It catalyses the reaction L-aspartate(89)-[ribosomal protein uS12]-hydrogen + (sulfur carrier)-SH + AH2 + 2 S-adenosyl-L-methionine = 3-methylsulfanyl-L-aspartate(89)-[ribosomal protein uS12]-hydrogen + (sulfur carrier)-H + 5'-deoxyadenosine + L-methionine + A + S-adenosyl-L-homocysteine + 2 H(+). In terms of biological role, catalyzes the methylthiolation of an aspartic acid residue of ribosomal protein uS12. The polypeptide is Ribosomal protein uS12 methylthiotransferase RimO (Helicobacter hepaticus (strain ATCC 51449 / 3B1)).